The following is a 47-amino-acid chain: Large ribosomal subunit protein eL40 (47 aa).

This sequence belongs to the eukaryotic ribosomal protein eL40 family.

This Methanococcus vannielii (strain ATCC 35089 / DSM 1224 / JCM 13029 / OCM 148 / SB) protein is Large ribosomal subunit protein eL40.